Here is a 160-residue protein sequence, read N- to C-terminus: Transcription elongation factor GreA (160 aa).

The stretch at 49–75 (SEYDEAKNDQAFTEGRIIQLENMLKNA) forms a coiled coil.

The protein belongs to the GreA/GreB family.

In terms of biological role, necessary for efficient RNA polymerase transcription elongation past template-encoded arresting sites. The arresting sites in DNA have the property of trapping a certain fraction of elongating RNA polymerases that pass through, resulting in locked ternary complexes. Cleavage of the nascent transcript by cleavage factors such as GreA or GreB allows the resumption of elongation from the new 3'terminus. GreA releases sequences of 2 to 3 nucleotides. This chain is Transcription elongation factor GreA, found in Clostridium beijerinckii (strain ATCC 51743 / NCIMB 8052) (Clostridium acetobutylicum).